A 373-amino-acid polypeptide reads, in one-letter code: 8-amino-7-oxononanoate synthase (373 aa).

Arg16 contributes to the substrate binding site. Pyridoxal 5'-phosphate is bound at residue 93 to 94 (GF). Substrate is bound at residue His118. Pyridoxal 5'-phosphate is bound by residues Ser165, 190–193 (DEAH), and 222–225 (TFSK). N6-(pyridoxal phosphate)lysine is present on Lys225. Thr334 lines the substrate pocket.

Belongs to the class-II pyridoxal-phosphate-dependent aminotransferase family. BioF subfamily. As to quaternary structure, homodimer. Requires pyridoxal 5'-phosphate as cofactor.

The catalysed reaction is 6-carboxyhexanoyl-[ACP] + L-alanine + H(+) = (8S)-8-amino-7-oxononanoate + holo-[ACP] + CO2. It participates in cofactor biosynthesis; biotin biosynthesis. Its function is as follows. Catalyzes the decarboxylative condensation of pimeloyl-[acyl-carrier protein] and L-alanine to produce 8-amino-7-oxononanoate (AON), [acyl-carrier protein], and carbon dioxide. The protein is 8-amino-7-oxononanoate synthase of Helicobacter pylori (strain ATCC 700392 / 26695) (Campylobacter pylori).